The following is a 477-amino-acid chain: P3 protein (477 aa).

The tract at residues 1-21 (MVFRSGEGHSLQWPGPEGGTG) is disordered. Transmembrane regions (helical) follow at residues 225–245 (PMLL…FLMA), 253–273 (ALAL…SYLF), 281–301 (VTLA…FLPL), 320–340 (VSKI…GVVI), 361–381 (VLLL…LAGV), 383–403 (LPIV…GYGL), 417–437 (VSIE…QLSL), and 450–470 (FLVA…HFIY).

The protein belongs to the bile acid:sodium symporter (BASS) (TC 2.A.28) family.

It localises to the membrane. Functionally, the ubiquitous expression and the conservation of the sequence in distant animal species suggest that the gene codes for a protein with housekeeping functions. The sequence is that of P3 protein (SLC10A3) from Bos taurus (Bovine).